Consider the following 202-residue polypeptide: NADH-quinone oxidoreductase subunit C (202 aa).

This sequence belongs to the complex I 30 kDa subunit family. NDH-1 is composed of 14 different subunits. Subunits NuoB, C, D, E, F, and G constitute the peripheral sector of the complex.

It localises to the cell inner membrane. It catalyses the reaction a quinone + NADH + 5 H(+)(in) = a quinol + NAD(+) + 4 H(+)(out). NDH-1 shuttles electrons from NADH, via FMN and iron-sulfur (Fe-S) centers, to quinones in the respiratory chain. The immediate electron acceptor for the enzyme in this species is believed to be ubiquinone. Couples the redox reaction to proton translocation (for every two electrons transferred, four hydrogen ions are translocated across the cytoplasmic membrane), and thus conserves the redox energy in a proton gradient. In Brucella abortus (strain 2308), this protein is NADH-quinone oxidoreductase subunit C.